Reading from the N-terminus, the 64-residue chain is Large ribosomal subunit protein bL28c (64 aa).

This sequence belongs to the bacterial ribosomal protein bL28 family.

The protein localises to the plastid. It localises to the chloroplast. The chain is Large ribosomal subunit protein bL28c from Gracilaria tenuistipitata var. liui (Red alga).